Consider the following 325-residue polypeptide: 5-dehydro-2-deoxygluconokinase (325 aa).

The protein belongs to the carbohydrate kinase PfkB family.

The catalysed reaction is 5-dehydro-2-deoxy-D-gluconate + ATP = 6-phospho-5-dehydro-2-deoxy-D-gluconate + ADP + H(+). Its pathway is polyol metabolism; myo-inositol degradation into acetyl-CoA; acetyl-CoA from myo-inositol: step 5/7. In terms of biological role, catalyzes the phosphorylation of 5-dehydro-2-deoxy-D-gluconate (2-deoxy-5-keto-D-gluconate or DKG) to 6-phospho-5-dehydro-2-deoxy-D-gluconate (DKGP). This Bacillus subtilis (strain 168) protein is 5-dehydro-2-deoxygluconokinase (iolC).